Reading from the N-terminus, the 910-residue chain is DnaJ-like protein MG200 homolog (910 aa).

Residues 4 to 73 (AKRDYYEVLG…RANYDKYGHD (70 aa)) enclose the J domain. 3 disordered regions span residues 102–160 (DNLS…DDIP), 260–408 (TEPS…LEQD), and 451–486 (VLSD…STAP). A compositionally biased stretch (basic residues) spans 111–121 (KKEKTKTKKKG). A compositionally biased stretch (low complexity) spans 273–283 (DSDAVTAATTV). Acidic residues predominate over residues 357–379 (SDEADATNEPTEQDTISEPEQET). Residues 451–462 (VLSDQNPNPQTP) are compositionally biased toward polar residues.

This is DnaJ-like protein MG200 homolog from Mycoplasma pneumoniae (strain ATCC 29342 / M129 / Subtype 1) (Mycoplasmoides pneumoniae).